The following is a 1085-amino-acid chain: Solute carrier family 12 member 4 (1085 aa).

Residues M1 to G119 are Cytoplasmic-facing. S24 is subject to Phosphoserine. Residues Y28 to S46 are compositionally biased toward basic and acidic residues. Residues Y28–S47 form a disordered region. S47, S59, S81, and S88 each carry phosphoserine. The discontinuously helical transmembrane segment at T120–L141 threads the bilayer. K(+)-binding residues include N131 and I132. The Extracellular segment spans residues T142–G149. A helical membrane pass occupies residues V150–S172. Over A173–E196 the chain is Cytoplasmic. Residues F197–L225 form a helical membrane-spanning segment. Y216 contributes to the K(+) binding site. Over T226–L248 the chain is Extracellular. N-linked (GlcNAc...) asparagine glycosylation is present at N245. The next 2 helical transmembrane spans lie at N249–K271 and Y272–K297. At S298–S419 the chain is on the extracellular side. The cysteines at positions 308 and 323 are disulfide-linked. 3 N-linked (GlcNAc...) asparagine glycosylation sites follow: N312, N331, and N347. An intrachain disulfide couples C343 to C353. A helical membrane pass occupies residues F420 to R440. P429 and T432 together coordinate K(+). G433, I434, and M435 together coordinate chloride. Topologically, residues S441 to S450 are cytoplasmic. The helical transmembrane segment at I451–F473 threads the bilayer. Residues G474–P504 are Extracellular-facing. A helical transmembrane segment spans residues W505–Q531. The Cytoplasmic portion of the chain corresponds to A532–P554. A run of 2 helical transmembrane segments spans residues T555 to D575 and M576 to V598. A chloride-binding site is contributed by Y589. Residues Q599–K612 are Cytoplasmic-facing. 2 helical membrane passes run Y613–W635 and Y636–Y651. Residues I652–S1085 lie on the Cytoplasmic side of the membrane. Residues I665–E681 form a scissor helix region. L697, K699, K707, Y708, and V730 together coordinate ATP. S734 is subject to Phosphoserine. Residues G794, W795, and Y797 each coordinate ATP. 2 positions are modified to phosphoserine: S916 and S967. T983 bears the Phosphothreonine mark. S1050 carries the post-translational modification Phosphoserine.

Belongs to the SLC12A transporter family. K/Cl co-transporter subfamily. Homodimer; adopts a domain-swap conformation at the scissor helices connecting the transmembrane domain and C-terminal domain. Heterodimer with other K-Cl cotransporters. Post-translationally, N-glycosylated. In terms of processing, phosphorylated, phosphorylation may regulate transporter activity.

It localises to the cell membrane. It catalyses the reaction K(+)(in) + chloride(in) = K(+)(out) + chloride(out). Its activity is regulated as follows. Inhibited by WNK3. In terms of biological role, mediates electroneutral potassium-chloride cotransport when activated by cell swelling. May contribute to cell volume homeostasis in single cells. May be involved in the regulation of basolateral Cl(-) exit in NaCl absorbing epithelia. This is Solute carrier family 12 member 4 (SLC12A4) from Oryctolagus cuniculus (Rabbit).